Here is a 108-residue protein sequence, read N- to C-terminus: UPF0060 membrane protein SAR2425 (108 aa).

4 helical membrane-spanning segments follow: residues 5-25 (IFIFILAGLCEIGGGYLIWLW), 31-51 (SSLVGLIGGVILMLYGVIATF), 60-80 (VYAAYGGVFIIMSLIFAMVVD), and 86-106 (KYDVIGAIICIVGVLVMLLPS).

It belongs to the UPF0060 family.

It is found in the cell membrane. The polypeptide is UPF0060 membrane protein SAR2425 (Staphylococcus aureus (strain MRSA252)).